The following is a 269-amino-acid chain: Sulfur carrier protein FdhD (269 aa).

Cys-111 acts as the Cysteine persulfide intermediate in catalysis.

It belongs to the FdhD family.

The protein resides in the cytoplasm. Required for formate dehydrogenase (FDH) activity. Acts as a sulfur carrier protein that transfers sulfur from IscS to the molybdenum cofactor prior to its insertion into FDH. This is Sulfur carrier protein FdhD from Brucella abortus biovar 1 (strain 9-941).